The sequence spans 219 residues: MVKVKICGLITQEDAMLACQYGADLLGFNFYEKSPRYISPAKAAEIIKTLPSNVASVGVFVGKEANEINQICEEAMIDIAQIHDESLCAKDFTKLRPKIIKAFRVQNTFDTREIRRFYEQTGVNTFIFDAFQKDLYGGTGKRLDVELAHKVFKEIEGFGYGFLAGGLNEKNVETTVRLLKPYGVDVASGIESEPGKKAHDKMALFIREAKKSLCLEPGY.

The protein belongs to the TrpF family.

It catalyses the reaction N-(5-phospho-beta-D-ribosyl)anthranilate = 1-(2-carboxyphenylamino)-1-deoxy-D-ribulose 5-phosphate. It participates in amino-acid biosynthesis; L-tryptophan biosynthesis; L-tryptophan from chorismate: step 3/5. This Chloroherpeton thalassium (strain ATCC 35110 / GB-78) protein is N-(5'-phosphoribosyl)anthranilate isomerase.